A 149-amino-acid chain; its full sequence is Probable conjugal transfer protein TrbE part 1 (149 aa).

This sequence belongs to the TrbE/VirB4 family.

The protein is Probable conjugal transfer protein TrbE part 1 (trbEA) of Sinorhizobium fredii (strain NBRC 101917 / NGR234).